Consider the following 185-residue polypeptide: Elongation factor P (185 aa).

This sequence belongs to the elongation factor P family.

The protein resides in the cytoplasm. Its pathway is protein biosynthesis; polypeptide chain elongation. In terms of biological role, involved in peptide bond synthesis. Stimulates efficient translation and peptide-bond synthesis on native or reconstituted 70S ribosomes in vitro. Probably functions indirectly by altering the affinity of the ribosome for aminoacyl-tRNA, thus increasing their reactivity as acceptors for peptidyl transferase. In Bacillus anthracis (strain CDC 684 / NRRL 3495), this protein is Elongation factor P.